Reading from the N-terminus, the 189-residue chain is Peptidyl-tRNA hydrolase (189 aa).

A tRNA-binding site is contributed by tyrosine 14. The active-site Proton acceptor is histidine 19. TRNA is bound by residues tyrosine 64, asparagine 66, and asparagine 112.

Belongs to the PTH family. In terms of assembly, monomer.

The protein resides in the cytoplasm. The catalysed reaction is an N-acyl-L-alpha-aminoacyl-tRNA + H2O = an N-acyl-L-amino acid + a tRNA + H(+). In terms of biological role, hydrolyzes ribosome-free peptidyl-tRNAs (with 1 or more amino acids incorporated), which drop off the ribosome during protein synthesis, or as a result of ribosome stalling. Functionally, catalyzes the release of premature peptidyl moieties from peptidyl-tRNA molecules trapped in stalled 50S ribosomal subunits, and thus maintains levels of free tRNAs and 50S ribosomes. The chain is Peptidyl-tRNA hydrolase from Dehalococcoides mccartyi (strain ATCC BAA-2266 / KCTC 15142 / 195) (Dehalococcoides ethenogenes (strain 195)).